Reading from the N-terminus, the 284-residue chain is Para-Rep C3 (284 aa).

Residues 3-98 enclose the CRESS-DNA virus Rep endonuclease domain; sequence TVQSTCWVFT…IEGPWEYGKY (96 aa). Positions 10 to 13 match the RCR-1 motif; that stretch reads VFTL. Positions 36 and 42 each coordinate a divalent metal cation. Residues 42–44 carry the RCR-2 motif; the sequence is HLQ. Positions 51–71 match the Nuclear localization signal motif; sequence AQQSLGQMKAIIPGAHFEKMR. Y81 acts as the For DNA cleavage activity in catalysis. The short motif at 81–84 is the RCR-3 element; that stretch reads YAMK. Residue D86 coordinates a divalent metal cation. Residues 98-104 carry the Nuclear localization signal motif; that stretch reads YIKKGSH. 174–182 contacts ATP; that stretch reads GPKGGEGKS.

It belongs to the nanoviridea/circoviridae replication-associated protein family. As to quaternary structure, homooligomer (Potential). Rep binds to repeated DNA motifs (iterons). The cofactor is Mg(2+). Mn(2+) is required as a cofactor.

It is found in the host nucleus. The enzyme catalyses ATP + H2O = ADP + phosphate + H(+). Initiates and terminates the replication only of its own subviral DNA molecule. The closed circular ssDNA genome is first converted to a superhelical dsDNA. Rep binds a specific hairpin at the genome origin of replication. Introduces an endonucleolytic nick within the intergenic region of the genome, thereby initiating the rolling circle replication (RCR). Following cleavage, binds covalently to the 5'-phosphate of DNA as a tyrosyl ester. The cleavage gives rise to a free 3'-OH that serves as a primer for the cellular DNA polymerase. The polymerase synthesizes the (+) strand DNA by rolling circle mechanism. After one round of replication, a Rep-catalyzed nucleotidyl transfer reaction releases a circular single-stranded virus genome, thereby terminating the replication. Displays origin-specific DNA cleavage, nucleotidyl transferase, ATPase and helicase activities. The protein is Para-Rep C3 (C3) of Milk vetch dwarf C3 alphasatellite (MVDC3A).